Here is a 188-residue protein sequence, read N- to C-terminus: MMPTGNFDLNEVKRRMQGAVQSLKHELGGLRTGRASASMLDPVQVEAYGSHMPLNQLATVSVPEPRLISVQVWDKSMVKAVEKAIVDSNLGLSPATEGQVLRLRIPELNEERRKELVKVAHKYAEAAKVAARHVRRDGLDVLKKLEKNHEMSEDDQKRHADEVQKVTDGTIAEIDQLLAAKEKEILTV.

This sequence belongs to the RRF family.

It is found in the cytoplasm. Functionally, responsible for the release of ribosomes from messenger RNA at the termination of protein biosynthesis. May increase the efficiency of translation by recycling ribosomes from one round of translation to another. This is Ribosome-recycling factor from Bradyrhizobium diazoefficiens (strain JCM 10833 / BCRC 13528 / IAM 13628 / NBRC 14792 / USDA 110).